A 117-amino-acid chain; its full sequence is Large ribosomal subunit protein bL19 (117 aa).

Belongs to the bacterial ribosomal protein bL19 family.

Functionally, this protein is located at the 30S-50S ribosomal subunit interface and may play a role in the structure and function of the aminoacyl-tRNA binding site. The polypeptide is Large ribosomal subunit protein bL19 (Cutibacterium acnes (strain DSM 16379 / KPA171202) (Propionibacterium acnes)).